We begin with the raw amino-acid sequence, 420 residues long: uncharacterized protein (420 aa).

The 173-residue stretch at 43–215 (NLCLVLDHSG…HTFRQLFQRM (173 aa)) folds into the VWFA domain. Positions 389–420 (LQSGEDLSEGDRKKTRMVSKTTLQPPSAPSEH) are disordered.

This is an uncharacterized protein from Synechocystis sp. (strain ATCC 27184 / PCC 6803 / Kazusa).